The sequence spans 55 residues: Large ribosomal subunit protein bL33 (55 aa).

It belongs to the bacterial ribosomal protein bL33 family.

The polypeptide is Large ribosomal subunit protein bL33 (Bartonella henselae (strain ATCC 49882 / DSM 28221 / CCUG 30454 / Houston 1) (Rochalimaea henselae)).